A 136-amino-acid chain; its full sequence is MMQPKRMKFRKMFKGRNRGLSKGTEVSFGEFGLKAVGRGRITARQIEAARRAMTRHVKRQGKIWIRVFPDKPITGKPLEVRQGKGKGNVEYYVAQTQPGKVLYEMEGVPEKLAREAFALAAAKLPLATTFVTRKVM.

Belongs to the universal ribosomal protein uL16 family. As to quaternary structure, part of the 50S ribosomal subunit.

Binds 23S rRNA and is also seen to make contacts with the A and possibly P site tRNAs. In Psychromonas ingrahamii (strain DSM 17664 / CCUG 51855 / 37), this protein is Large ribosomal subunit protein uL16.